Here is a 325-residue protein sequence, read N- to C-terminus: uncharacterized protein (325 aa).

It belongs to the mgp1/MG371 family.

This is an uncharacterized protein from Mycoplasma pneumoniae (strain ATCC 29342 / M129 / Subtype 1) (Mycoplasmoides pneumoniae).